The sequence spans 162 residues: Large ribosomal subunit protein uL30 (162 aa).

This sequence belongs to the universal ribosomal protein uL30 family. As to quaternary structure, part of the 50S ribosomal subunit.

The protein is Large ribosomal subunit protein uL30 of Desulfurococcus amylolyticus (strain DSM 18924 / JCM 16383 / VKM B-2413 / 1221n) (Desulfurococcus kamchatkensis).